A 597-amino-acid polypeptide reads, in one-letter code: Medium/long-chain-fatty-acid--CoA ligase FadD6 (597 aa).

Belongs to the ATP-dependent AMP-binding enzyme family.

It catalyses the reaction a medium-chain fatty acid + ATP + CoA = a medium-chain fatty acyl-CoA + AMP + diphosphate. The catalysed reaction is a long-chain fatty acid + ATP + CoA = a long-chain fatty acyl-CoA + AMP + diphosphate. The enzyme catalyses hexanoate + ATP + CoA = hexanoyl-CoA + AMP + diphosphate. It carries out the reaction octanoate + ATP + CoA = octanoyl-CoA + AMP + diphosphate. It catalyses the reaction decanoate + ATP + CoA = decanoyl-CoA + AMP + diphosphate. The catalysed reaction is dodecanoate + ATP + CoA = dodecanoyl-CoA + AMP + diphosphate. The enzyme catalyses tetradecanoate + ATP + CoA = tetradecanoyl-CoA + AMP + diphosphate. It carries out the reaction hexadecanoate + ATP + CoA = hexadecanoyl-CoA + AMP + diphosphate. It catalyses the reaction octadecanoate + ATP + CoA = octadecanoyl-CoA + AMP + diphosphate. The catalysed reaction is 9-decenoate + ATP + CoA = 9-decenoyl-CoA + AMP + diphosphate. The enzyme catalyses (9Z)-octadecenoate + ATP + CoA = (9Z)-octadecenoyl-CoA + AMP + diphosphate. It carries out the reaction 2-hydroxyhexadecanoate + ATP + CoA = 2-hydroxyhexadecanoyl-CoA + AMP + diphosphate. It catalyses the reaction 3-hydroxytetradecanoate + ATP + CoA = 3-hydroxytetradecanoyl-CoA + AMP + diphosphate. The catalysed reaction is 12-hydroxyoctadecanoate + ATP + CoA = 12-hydroxyoctadecanoyl-CoA + AMP + diphosphate. The enzyme catalyses 15-hydroxypentadecanoate + ATP + CoA = 15-hydroxypentadecanoyl-CoA + AMP + diphosphate. It carries out the reaction 16-hydroxyhexadecanoate + ATP + CoA = 16-hydroxyhexadecanoyl-CoA + AMP + diphosphate. It catalyses the reaction 2-methylhexadecanoate + ATP + CoA = 2-methylhexadecanoyl-CoA + AMP + diphosphate. The catalysed reaction is 3-methylundecanoate + ATP + CoA = 3-methylundecanoyl-CoA + AMP + diphosphate. The enzyme catalyses 12-methyltridecanoate + ATP + CoA = 12-methyltridecanoyl-CoA + AMP + diphosphate. It carries out the reaction 12-methyloctadecanoate + ATP + CoA = 12-methyloctadecanoyl-CoA + AMP + diphosphate. Catalyzes the activation of medium/long-chain fatty acids as acyl-coenzyme A (acyl-CoA). May play a role in the uptake of fatty acids by trapping them metabolically as CoA esters. May also play an important role in the channeling of fatty acids into triacylglycerol (TAG) for use by Mycobacterium during its dormancy. The sequence is that of Medium/long-chain-fatty-acid--CoA ligase FadD6 from Mycobacterium tuberculosis (strain ATCC 25618 / H37Rv).